Reading from the N-terminus, the 626-residue chain is Chaperone protein HtpG (626 aa).

The a; substrate-binding stretch occupies residues 1–341; sequence MRKKKFKAES…SEDLSLNISR (341 aa). A b region spans residues 342–552; it reads EMLQHDRQLK…DGEVTIEMEK (211 aa). A c region spans residues 553 to 626; it reads VLNAMPDSQQ…FTNDICKVMV (74 aa).

Belongs to the heat shock protein 90 family. In terms of assembly, homodimer.

It localises to the cytoplasm. In terms of biological role, molecular chaperone. Has ATPase activity. The chain is Chaperone protein HtpG from Bacillus velezensis (strain DSM 23117 / BGSC 10A6 / LMG 26770 / FZB42) (Bacillus amyloliquefaciens subsp. plantarum).